The chain runs to 613 residues: tRNA 5-methylaminomethyl-2-thiouridine biosynthesis bifunctional protein MnmC (613 aa).

Residues methionine 1–glutamate 225 are tRNA (mnm(5)s(2)U34)-methyltransferase. The FAD-dependent cmnm(5)s(2)U34 oxidoreductase stretch occupies residues isoleucine 252–leucine 613.

In the N-terminal section; belongs to the methyltransferase superfamily. tRNA (mnm(5)s(2)U34)-methyltransferase family. The protein in the C-terminal section; belongs to the DAO family. Requires FAD as cofactor.

The protein localises to the cytoplasm. The enzyme catalyses 5-aminomethyl-2-thiouridine(34) in tRNA + S-adenosyl-L-methionine = 5-methylaminomethyl-2-thiouridine(34) in tRNA + S-adenosyl-L-homocysteine + H(+). In terms of biological role, catalyzes the last two steps in the biosynthesis of 5-methylaminomethyl-2-thiouridine (mnm(5)s(2)U) at the wobble position (U34) in tRNA. Catalyzes the FAD-dependent demodification of cmnm(5)s(2)U34 to nm(5)s(2)U34, followed by the transfer of a methyl group from S-adenosyl-L-methionine to nm(5)s(2)U34, to form mnm(5)s(2)U34. This chain is tRNA 5-methylaminomethyl-2-thiouridine biosynthesis bifunctional protein MnmC, found in Campylobacter jejuni subsp. jejuni serotype O:6 (strain 81116 / NCTC 11828).